The chain runs to 142 residues: Hemoglobin subunit alpha-A (142 aa).

In terms of domain architecture, Globin spans V2–R142. H59 serves as a coordination point for O2. H88 serves as a coordination point for heme b.

This sequence belongs to the globin family. Heterotetramer of two alpha chains and two beta chains. As to expression, red blood cells.

Involved in oxygen transport from the lung to the various peripheral tissues. The sequence is that of Hemoglobin subunit alpha-A (HBAA) from Anser anser anser (Western greylag goose).